A 344-amino-acid polypeptide reads, in one-letter code: UDP-N-acetylglucosamine transporter UGNT1 (344 aa).

The interval 1 to 23 is disordered; it reads MRNNPVLPVSDPPLAGENDSDGK. 9 helical membrane passes run 41-61, 66-86, 92-112, 114-134, 167-187, 194-214, 226-246, 264-284, and 304-324; these read YAAL…KAAL, FPCV…FLYA, IISF…FVPV, TLFH…ASMA, YTRS…FAGA, FYGY…LATI, FGLM…WTFI, FMVV…CIFL, and FTVG…MNVI.

The protein belongs to the TPT transporter family. UGnT (TC 2.A.7.15) subfamily. Expressed in roots, leaves, stems, flowers and siliques.

Its subcellular location is the golgi apparatus membrane. Functionally, mediates the transport of UDP-N-acetylglucosamine (UDP-GlcNAc) across the Golgi apparatus membrane. Delivers an essential substrate for the maturation of N-glycans and the GlcNAc-containing glycosyl inositol phosphorylceramide (GIPC) class of sphingolipids in the Golgi apparatus. The sequence is that of UDP-N-acetylglucosamine transporter UGNT1 from Arabidopsis thaliana (Mouse-ear cress).